The sequence spans 89 residues: Small ribosomal subunit protein uS15 (89 aa).

The protein belongs to the universal ribosomal protein uS15 family. Part of the 30S ribosomal subunit. Forms a bridge to the 50S subunit in the 70S ribosome, contacting the 23S rRNA.

Its function is as follows. One of the primary rRNA binding proteins, it binds directly to 16S rRNA where it helps nucleate assembly of the platform of the 30S subunit by binding and bridging several RNA helices of the 16S rRNA. In terms of biological role, forms an intersubunit bridge (bridge B4) with the 23S rRNA of the 50S subunit in the ribosome. The polypeptide is Small ribosomal subunit protein uS15 (Staphylococcus saprophyticus subsp. saprophyticus (strain ATCC 15305 / DSM 20229 / NCIMB 8711 / NCTC 7292 / S-41)).